The chain runs to 359 residues: 3-dehydroquinate synthase (359 aa).

NAD(+) contacts are provided by residues 71 to 76 (DGEQFK), 105 to 109 (GVIGD), 129 to 130 (TT), Lys-142, Lys-151, and 169 to 172 (CLQT). The Zn(2+) site is built by Glu-184, His-247, and His-264.

Belongs to the sugar phosphate cyclases superfamily. Dehydroquinate synthase family. It depends on Co(2+) as a cofactor. The cofactor is Zn(2+). Requires NAD(+) as cofactor.

The protein localises to the cytoplasm. The enzyme catalyses 7-phospho-2-dehydro-3-deoxy-D-arabino-heptonate = 3-dehydroquinate + phosphate. It functions in the pathway metabolic intermediate biosynthesis; chorismate biosynthesis; chorismate from D-erythrose 4-phosphate and phosphoenolpyruvate: step 2/7. In terms of biological role, catalyzes the conversion of 3-deoxy-D-arabino-heptulosonate 7-phosphate (DAHP) to dehydroquinate (DHQ). In Shewanella sp. (strain ANA-3), this protein is 3-dehydroquinate synthase.